Here is a 100-residue protein sequence, read N- to C-terminus: Small ribosomal subunit protein uS14c (100 aa).

This sequence belongs to the universal ribosomal protein uS14 family. Part of the 30S ribosomal subunit.

It is found in the plastid. Its subcellular location is the chloroplast. In terms of biological role, binds 16S rRNA, required for the assembly of 30S particles. The chain is Small ribosomal subunit protein uS14c from Chlorokybus atmophyticus (Soil alga).